We begin with the raw amino-acid sequence, 553 residues long: Thioredoxin domain-containing protein 2 (553 aa).

Disordered stretches follow at residues M1–E37 and T77–M442. A compositionally biased stretch (basic and acidic residues) spans P99–Q143. 22 repeat units span residues Q113 to I127, Q128 to I142, Q143 to I157, Q158 to S172, Q173 to I187, Q188 to I202, Q203 to I217, Q218 to S232, Q233 to I247, Q248 to I262, Q263 to S277, Q278 to I292, Q293 to I307, Q308 to I322, Q323 to I337, Q338 to I352, Q353 to I367, Q368 to I382, Q383 to I397, P398 to I412, Q413 to T427, and P428 to M442. Residues Q113 to M442 form a 22 X 15 AA approximate tandem repeat of Q-P-K-X-G-D-I-P-K-S-[PS]-E-[KE]-X-I region. Basic and acidic residues predominate over residues Q173–I209. Residues Q233–I254 are compositionally biased toward basic and acidic residues. 2 stretches are compositionally biased toward basic and acidic residues: residues Q278 to K376 and K385 to E439. S362 carries the post-translational modification Phosphoserine. S392 carries the post-translational modification Phosphoserine. The Thioredoxin domain maps to S429 to K553. A disulfide bridge connects residues C480 and C483.

In terms of tissue distribution, testis-specific. Only expressed during spermiogenesis, prominently in round and elongating spermatids.

It is found in the cytoplasm. Probably plays a regulatory role in sperm development. May participate in regulation of fibrous sheath (FS) assembly by supporting the formation of disulfide bonds during sperm tail morphogenesis. May also be required to rectify incorrect disulfide pairing and generate suitable pairs between the FS constituents. Can reduce disulfide bonds in vitro in the presence of NADP and thioredoxin reductase. The chain is Thioredoxin domain-containing protein 2 (TXNDC2) from Homo sapiens (Human).